Consider the following 499-residue polypeptide: Potassium voltage-gated channel subfamily A member 2 (499 aa).

The disordered stretch occupies residues 1 to 26 (MTVATGDPADEAAALPGHPQDTYDPE). Residues 1–125 (MTVATGDPAD…YELGEEAMEM (125 aa)) form a tetramerization domain region. Residues 1 to 160 (MTVATGDPAD…LLFEYPESSG (160 aa)) lie on the Cytoplasmic side of the membrane. The chain crosses the membrane as a helical span at residues 161–182 (PARIIAIVSVMVILISIVSFCL). Over 183 to 221 (ETLPIFRDENEDMHGSGVTFHTYSNSTIGYQQSTSFTDP) the chain is Extracellular. An N-linked (GlcNAc...) asparagine glycan is attached at Asn207. A helical membrane pass occupies residues 222 to 243 (FFIVETLCIIWFSFEFLVRFFA). A lipid anchor (S-palmitoyl cysteine) is attached at Cys244. The Cytoplasmic portion of the chain corresponds to 244–254 (CPSKAGFFTNI). Residues 255–275 (MNIIDIVAIIPYFITLGTELA) traverse the membrane as a helical segment. The Extracellular portion of the chain corresponds to 276 to 289 (EKPEDAQQGQQAMS). The helical; Voltage-sensor transmembrane segment at 290–310 (LAILRVIRLVRVFRIFKLSRH) threads the bilayer. Residues 311 to 325 (SKGLQILGQTLKASM) lie on the Cytoplasmic side of the membrane. The segment at 312–325 (KGLQILGQTLKASM) is S4-S5 linker. The helical transmembrane segment at 326–347 (RELGLLIFFLFIGVILFSSAVY) threads the bilayer. Residues 348–361 (FAEADERESQFPSI) lie on the Extracellular side of the membrane. The helical intramembrane region spans 362–373 (PDAFWWAVVSMT). Residues 374 to 379 (TVGYGD) carry the Selectivity filter motif. Residues 374–381 (TVGYGDMV) lie within the membrane without spanning it. At 382–388 (PTTIGGK) the chain is on the extracellular side. A helical transmembrane segment spans residues 389–417 (IVGSLCAIAGVLTIALPVPVIVSNFNYFY). Residues 418–499 (HRETEGEEQA…VNITKMLTDV (82 aa)) are Cytoplasmic-facing. Position 429 is a phosphotyrosine (Tyr429). Phosphoserine is present on residues Ser434, Ser440, Ser441, and Ser449. The residue at position 458 (Tyr458) is a Phosphotyrosine. Phosphoserine is present on Ser468. Positions 497 to 499 (TDV) match the PDZ-binding motif.

Belongs to the potassium channel family. A (Shaker) (TC 1.A.1.2) subfamily. Kv1.2/KCNA2 sub-subfamily. In terms of assembly, homotetramer and heterotetramer with other channel-forming alpha subunits, such as KCNA1, KCNA4, KCNA5, KCNA6 and KCNA7. Channel activity is regulated by interaction with the beta subunits, including KCNAB1 and KCNAB2. Identified in a complex with KCNA1 and KCNAB2. Identified in a complex with KCNA5 and KCNAB1. Identified in a complex with KCNA4 and FYN. Interacts with the beta subunit KCNAB1. Interacts with PTK2B. Interacts (via C-terminus) with CTTN. Interacts (via N-terminal cytoplasmic domain) with RHOA (GTP-bound form); this regulates channel activity by reducing location at the cell surface in response to CHRM1 activation. Interacts with DRD2. Interacts with SIGMAR1; cocaine consumption leads to increased interaction. Interacts with ADAM22. Interacts (via C-terminus) with the PDZ domains of DLG1, DLG2 and DLG4. Interacts with CNTNAP2. Interacts with ADAM11. Interacts with LYNX1. Post-translationally, phosphorylated on tyrosine residues; phosphorylation increases in response to ischemia. Phosphorylated on tyrosine residues by activated PTK2B/PYK2. Phosphorylation on tyrosine residues suppresses ion channel activity. Phosphorylated on tyrosine residues in response to CHRM1 activation; this abolishes interaction with CTTN. This is probably due to endocytosis of the phosphorylated channel subunits. Phosphorylated on serine residues in response to increased cAMP levels; phosphorylation is apparently not catalyzed by PKA. N-glycosylated, with complex, sialylated N-glycans. As to expression, detected in brain cortex. Detected in peroneal nerve in the juxtaparanodal regions of the node of Ranvier; expression is decreased in patients with diabetes mellitus that suffer from axonal neuropathy. Detected in paranodal and juxtanodal zones in myelinated spinal cord (at protein level).

The protein localises to the cell membrane. It localises to the membrane. Its subcellular location is the cell projection. It is found in the axon. The protein resides in the synapse. The protein localises to the endoplasmic reticulum membrane. It localises to the lamellipodium membrane. Its subcellular location is the synaptosome. It is found in the presynaptic cell membrane. The protein resides in the dendrite. The protein localises to the cell junction. It localises to the paranodal septate junction. It catalyses the reaction K(+)(in) = K(+)(out). Its activity is regulated as follows. Inhibited by 4-aminopyridine (4-AP) and charybdotoxin (CTX), but not by tetraethylammonium (TEA). Inhibited by dendrotoxin (DTX). Inhibited by tityustoxin-K alpha (TsTX-Kalpha), a toxin that is highly specific for KCNA2. Inhibited by maurotoxin. Inhibited by kappaM conotoxins kappaM-RIIIJ and kappaM-RIIIK; kappaM-RIIIJ has much higher affinity for channels containing KCNA2 than kappaM-RIIIK, with the exception of heterodimers formed by KCNA2 and KCNA7 where the opposite is true. Voltage-gated potassium channel that mediates transmembrane potassium transport in excitable membranes, primarily in the brain and the central nervous system, but also in the cardiovascular system. Prevents aberrant action potential firing and regulates neuronal output. Forms tetrameric potassium-selective channels through which potassium ions pass in accordance with their electrochemical gradient. The channel alternates between opened and closed conformations in response to the voltage difference across the membrane. Can form functional homotetrameric channels and heterotetrameric channels that contain variable proportions of KCNA1, KCNA2, KCNA4, KCNA5, KCNA6, KCNA7, and possibly other family members as well; channel properties depend on the type of alpha subunits that are part of the channel. Channel properties are modulated by cytoplasmic beta subunits that regulate the subcellular location of the alpha subunits and promote rapid inactivation of delayed rectifier potassium channels. In vivo, membranes probably contain a mixture of heteromeric potassium channel complexes, making it difficult to assign currents observed in intact tissues to any particular potassium channel family member. Homotetrameric KCNA2 forms a delayed-rectifier potassium channel that opens in response to membrane depolarization, followed by slow spontaneous channel closure. In contrast, a heteromultimer formed by KCNA2 and KCNA4 shows rapid inactivation. Regulates neuronal excitability and plays a role as pacemaker in the regulation of neuronal action potentials. KCNA2-containing channels play a presynaptic role and prevent hyperexcitability and aberrant action potential firing. Response to toxins that are selective for KCNA2-containing potassium channels suggests that in Purkinje cells, dendritic subthreshold KCNA2-containing potassium channels prevent random spontaneous calcium spikes, suppressing dendritic hyperexcitability without hindering the generation of somatic action potentials, and thereby play an important role in motor coordination. Plays a role in the induction of long-term potentiation of neuron excitability in the CA3 layer of the hippocampus. May function as down-stream effector for G protein-coupled receptors and inhibit GABAergic inputs to basolateral amygdala neurons. May contribute to the regulation of neurotransmitter release, such as gamma-aminobutyric acid (GABA). Contributes to the regulation of the axonal release of the neurotransmitter dopamine. Reduced KCNA2 expression plays a role in the perception of neuropathic pain after peripheral nerve injury, but not acute pain. Plays a role in the regulation of the time spent in non-rapid eye movement (NREM) sleep. This is Potassium voltage-gated channel subfamily A member 2 (KCNA2) from Homo sapiens (Human).